A 712-amino-acid polypeptide reads, in one-letter code: MDTSSKENIQLFCKTSVQPVGRPSFKTEYPSSEEKQPCCGELKVFLCALSFVYFAKALAEGYLKSTITQIERRFDIPSSLVGVIDGSFEIGNLLVITFVSYFGAKLHRPKIIGAGCVIMGVGTLLIAMPQFFMEQYKYERYSPSSNSTLSISPCLLESSSQLPVSVMEKSKSKISNECEVDTSSSMWIYVFLGNLLRGIGETPIQPLGIAYLDDFASEDNAAFYIGCVQTVAIIGPIFGFLLGSLCAKLYVDIGFVNLDHITITPKDPQWVGAWWLGYLIAGIISLLAAVPFWYLPKSLPRSQSREDSNSSSEKSKFIIDDHTDYQTPQGENAKIMEMARDFLPSLKNLFGNPVYFLYLCTSTVQFNSLFGMVTYKPKYIEQQYGQSSSRANFVIGLINIPAVALGIFSGGIVMKKFRISVCGAAKLYLGSSVFGYLLFLSLFALGCENSDVAGLTVSYQGTKPVSYHERALFSDCNSRCKCSETKWEPMCGENGITYVSACLAGCQTSNRSGKNIIFYNCTCVGIAASKSGNSSGIVGRCQKDNGCPQMFLYFLVISVITSYTLSLGGIPGYILLLRCIKPQLKSFALGIYTLAIRVLAGIPAPVYFGVLIDTSCLKWGFKRCGSRGSCRLYDSNVFRHIYLGLTVILGTVSILLSIAVLFILKKNYVSKHRSFITKRERTMVSTRFQKENYTTSDHLLQPNYWPGKETQL.

Residues 1 to 43 (MDTSSKENIQLFCKTSVQPVGRPSFKTEYPSSEEKQPCCGELK) are Cytoplasmic-facing. The helical transmembrane segment at 44–63 (VFLCALSFVYFAKALAEGYL) threads the bilayer. At 64 to 82 (KSTITQIERRFDIPSSLVG) the chain is on the extracellular side. Residues 83 to 103 (VIDGSFEIGNLLVITFVSYFG) form a helical membrane-spanning segment. At 104-109 (AKLHRP) the chain is on the cytoplasmic side. Residues 110–134 (KIIGAGCVIMGVGTLLIAMPQFFME) form a helical membrane-spanning segment. Topologically, residues 135-184 (QYKYERYSPSSNSTLSISPCLLESSSQLPVSVMEKSKSKISNECEVDTSS) are extracellular. Residue Asn-146 is glycosylated (N-linked (GlcNAc...) asparagine). Residues 185–213 (SMWIYVFLGNLLRGIGETPIQPLGIAYLD) form a helical membrane-spanning segment. The Cytoplasmic portion of the chain corresponds to 214 to 232 (DFASEDNAAFYIGCVQTVA). A helical membrane pass occupies residues 233–253 (IIGPIFGFLLGSLCAKLYVDI). The Extracellular segment spans residues 254-271 (GFVNLDHITITPKDPQWV). The helical transmembrane segment at 272–296 (GAWWLGYLIAGIISLLAAVPFWYLP) threads the bilayer. At 297–348 (KSLPRSQSREDSNSSSEKSKFIIDDHTDYQTPQGENAKIMEMARDFLPSLKN) the chain is on the cytoplasmic side. Residues 349–370 (LFGNPVYFLYLCTSTVQFNSLF) form a helical membrane-spanning segment. Residues 371 to 390 (GMVTYKPKYIEQQYGQSSSR) are Extracellular-facing. The helical transmembrane segment at 391–414 (ANFVIGLINIPAVALGIFSGGIVM) threads the bilayer. Residues 415–418 (KKFR) are Cytoplasmic-facing. The chain crosses the membrane as a helical span at residues 419 to 442 (ISVCGAAKLYLGSSVFGYLLFLSL). At 443–554 (FALGCENSDV…NGCPQMFLYF (112 aa)) the chain is on the extracellular side. One can recognise a Kazal-like domain in the interval 470 to 525 (RALFSDCNSRCKCSETKWEPMCGENGITYVSACLAGCQTSNRSGKNIIFYNCTCVG). 3 cysteine pairs are disulfide-bonded: Cys-476/Cys-506, Cys-482/Cys-502, and Cys-491/Cys-523. 3 N-linked (GlcNAc...) asparagine glycosylation sites follow: Asn-510, Asn-520, and Asn-533. Residues 555–577 (LVISVITSYTLSLGGIPGYILLL) form a helical membrane-spanning segment. The Cytoplasmic segment spans residues 578–586 (RCIKPQLKS). A helical transmembrane segment spans residues 587–612 (FALGIYTLAIRVLAGIPAPVYFGVLI). At 613-646 (DTSCLKWGFKRCGSRGSCRLYDSNVFRHIYLGLT) the chain is on the extracellular side. A helical membrane pass occupies residues 647-664 (VILGTVSILLSIAVLFIL). At 665–712 (KKNYVSKHRSFITKRERTMVSTRFQKENYTTSDHLLQPNYWPGKETQL) the chain is on the cytoplasmic side.

Belongs to the organo anion transporter (TC 2.A.60) family. Highly expressed in brain and in Leydig cells in testis. Localized in nests of Leydig cells (at protein level). Expressed in choroid plexus (at protein level). Not strongly enriched in cerebral microvessels.

The protein localises to the cell membrane. It carries out the reaction 3,3',5'-triiodo-L-thyronine(out) = 3,3',5'-triiodo-L-thyronine(in). The catalysed reaction is L-thyroxine(out) = L-thyroxine(in). It catalyses the reaction L-thyroxine sulfate(out) = L-thyroxine sulfate(in). Mediates the Na(+)-independent high affinity transport of organic anions such as the thyroid hormones L-thyroxine (T4), L-thyroxine sulfate (T4S), and 3,3',5'-triiodo-L-thyronine (reverse T3, rT3) at the plasma membrane. Regulates T4 levels in different brain regions by transporting T4, and also by serving as an export pump for T4S, which is a source of T4 after hydrolysis by local sulfatases. Increases the access of these substrates to the intracellular sites where they are metabolized by the deiodinases. Other potential substrates, such as triiodothyronine (T3), 17-beta-glucuronosyl estradiol (17beta-estradiol 17-O-(beta-D-glucuronate)), estrone-3-sulfate (E1S) and sulfobromophthalein (BSP) are transported with much lower efficiency. Transports T4 and E1S in a pH-insensitive manner. Facilitates the transport of thyroid hormones across the blood-brain barrier and into glia and neuronal cells in the brain. The protein is Solute carrier organic anion transporter family member 1C1 (SLCO1C1) of Homo sapiens (Human).